The sequence spans 148 residues: Single-stranded DNA-binding protein, mitochondrial (148 aa).

Residues 1–16 constitute a mitochondrion transit peptide; sequence MFRRPVVQVLRQFVRH. The region spanning 30–141 is the SSB domain; the sequence is LNRVQLLGRV…IIADNIIFLS (112 aa). Serine 67 and serine 79 each carry phosphoserine. Lysine 113 carries the N6-acetyllysine modification. Lysine 122 is subject to N6-succinyllysine.

As to quaternary structure, homotetramer. Interacts with MPG/AAG, through inhibition of its glycosylase activity it potentially prevents formation of DNA breaks in ssDNA, ensuring that base removal primarily occurs in dsDNA. Interacts with POLDIP2. Interacts with PRIMPOL.

Its subcellular location is the mitochondrion. It is found in the mitochondrion matrix. The protein localises to the mitochondrion nucleoid. In terms of biological role, binds preferentially and cooperatively to pyrimidine rich single-stranded DNA (ss-DNA). In vitro, required to maintain the copy number of mitochondrial DNA (mtDNA) and plays a crucial role during mtDNA replication by stimulating the activity of the replisome components POLG and TWNK at the replication fork. Promotes the activity of the gamma complex polymerase POLG, largely by organizing the template DNA and eliminating secondary structures to favor ss-DNA conformations that facilitate POLG activity. In addition it is able to promote the 5'-3' unwinding activity of the mtDNA helicase TWNK. May also function in mtDNA repair. The chain is Single-stranded DNA-binding protein, mitochondrial (SSBP1) from Bos taurus (Bovine).